A 276-amino-acid polypeptide reads, in one-letter code: Dermonecrotic toxin LvSicTox-alphaII1 (276 aa).

H5 is an active-site residue. Mg(2+) contacts are provided by E25 and D27. H41 serves as the catalytic Nucleophile. 2 disulfides stabilise this stretch: C45-C51 and C47-C193. D85 is a binding site for Mg(2+).

Belongs to the arthropod phospholipase D family. Class II subfamily. Mg(2+) is required as a cofactor. Expressed by the venom gland.

Its subcellular location is the secreted. It catalyses the reaction an N-(acyl)-sphingosylphosphocholine = an N-(acyl)-sphingosyl-1,3-cyclic phosphate + choline. It carries out the reaction an N-(acyl)-sphingosylphosphoethanolamine = an N-(acyl)-sphingosyl-1,3-cyclic phosphate + ethanolamine. The enzyme catalyses a 1-acyl-sn-glycero-3-phosphocholine = a 1-acyl-sn-glycero-2,3-cyclic phosphate + choline. The catalysed reaction is a 1-acyl-sn-glycero-3-phosphoethanolamine = a 1-acyl-sn-glycero-2,3-cyclic phosphate + ethanolamine. Its function is as follows. Dermonecrotic toxins cleave the phosphodiester linkage between the phosphate and headgroup of certain phospholipids (sphingolipid and lysolipid substrates), forming an alcohol (often choline) and a cyclic phosphate. This toxin acts on sphingomyelin (SM). It may also act on ceramide phosphoethanolamine (CPE), lysophosphatidylcholine (LPC) and lysophosphatidylethanolamine (LPE), but not on lysophosphatidylserine (LPS), and lysophosphatidylglycerol (LPG). It acts by transphosphatidylation, releasing exclusively cyclic phosphate products as second products. Induces dermonecrosis, hemolysis, increased vascular permeability, edema, inflammatory response, and platelet aggregation. This Loxosceles variegata (Recluse spider) protein is Dermonecrotic toxin LvSicTox-alphaII1.